The sequence spans 167 residues: Ubiquitin-conjugating enzyme E2 14 (167 aa).

An N-acetylalanine modification is found at Ala2. The region spanning 5-165 (QASLLLQKQL…VSRCVRRSQE (161 aa)) is the UBC core domain. Cys90 acts as the Glycyl thioester intermediate in catalysis.

The protein belongs to the ubiquitin-conjugating enzyme family.

The catalysed reaction is S-ubiquitinyl-[E1 ubiquitin-activating enzyme]-L-cysteine + [E2 ubiquitin-conjugating enzyme]-L-cysteine = [E1 ubiquitin-activating enzyme]-L-cysteine + S-ubiquitinyl-[E2 ubiquitin-conjugating enzyme]-L-cysteine.. Its pathway is protein modification; protein ubiquitination. In terms of biological role, accepts the ubiquitin from the E1 complex and catalyzes its covalent attachment to other proteins. Involved in the formation of multiubiquitin chains. Signal the protein for selective degradation. The protein is Ubiquitin-conjugating enzyme E2 14 (UBC14) of Arabidopsis thaliana (Mouse-ear cress).